Consider the following 314-residue polypeptide: Mitochondrial 2-oxoglutarate/malate carrier protein (314 aa).

Alanine 2 bears the N-acetylalanine mark. Serine 6 bears the Phosphoserine mark. Solcar repeat units follow at residues 23–108 (VKFL…LFER), 117–208 (PGFL…SKQF), and 217–306 (DNIL…MNKA). A helical transmembrane segment spans residues 24-42 (KFLFGGLAGMGATVFVQPL). Lysine 57 carries the post-translational modification N6-succinyllysine. Lysine 73 carries the N6-acetyllysine modification. Residues 83 to 101 (GLSAGLLRQATYTTTRLGI) traverse the membrane as a helical segment. Tyrosine 102 bears the Phosphotyrosine mark. 3 consecutive transmembrane segments (helical) span residues 119–140 (FLLKALIGMTAGATGAFVGTPA), 183–202 (GCIPTMARAVVVNAAQLASY), and 222–240 (HFCASMISGLVTTAASMPV). Residue lysine 256 is modified to N6-acetyllysine. A helical membrane pass occupies residues 281-300 (GFTPYYARLGPHTVLTFIFL).

The protein belongs to the mitochondrial carrier (TC 2.A.29) family. In terms of assembly, interacts with SMIM26.

It localises to the mitochondrion inner membrane. The enzyme catalyses (S)-malate(in) + 2-oxoglutarate(out) = (S)-malate(out) + 2-oxoglutarate(in). The catalysed reaction is malonate(in) + 2-oxoglutarate(out) = malonate(out) + 2-oxoglutarate(in). It catalyses the reaction succinate(in) + 2-oxoglutarate(out) = succinate(out) + 2-oxoglutarate(in). It carries out the reaction maleate(in) + 2-oxoglutarate(out) = maleate(out) + 2-oxoglutarate(in). The enzyme catalyses oxaloacetate(in) + 2-oxoglutarate(out) = oxaloacetate(out) + 2-oxoglutarate(in). Catalyzes the transport of 2-oxoglutarate (alpha-oxoglutarate) across the inner mitochondrial membrane in an electroneutral exchange for malate. Can also exchange 2-oxoglutarate for other dicarboxylic acids such as malonate, succinate, maleate and oxaloacetate, although with lower affinity. Contributes to several metabolic processes, including the malate-aspartate shuttle, the oxoglutarate/isocitrate shuttle, in gluconeogenesis from lactate, and in nitrogen metabolism. Maintains mitochondrial fusion and fission events, and the organization and morphology of cristae. Involved in the regulation of apoptosis. Helps protect from cytotoxic-induced apoptosis by modulating glutathione levels in mitochondria. This chain is Mitochondrial 2-oxoglutarate/malate carrier protein (Slc25a11), found in Mus musculus (Mouse).